We begin with the raw amino-acid sequence, 447 residues long: Trigger factor (447 aa).

Residues glycine 164–proline 249 form the PPIase FKBP-type domain.

The protein belongs to the FKBP-type PPIase family. Tig subfamily.

The protein resides in the cytoplasm. The catalysed reaction is [protein]-peptidylproline (omega=180) = [protein]-peptidylproline (omega=0). In terms of biological role, involved in protein export. Acts as a chaperone by maintaining the newly synthesized protein in an open conformation. Functions as a peptidyl-prolyl cis-trans isomerase. This chain is Trigger factor, found in Rhodospirillum rubrum (strain ATCC 11170 / ATH 1.1.1 / DSM 467 / LMG 4362 / NCIMB 8255 / S1).